The primary structure comprises 170 residues: Phosphopantetheine adenylyltransferase (170 aa).

T17 is a binding site for substrate. ATP-binding positions include 17–18 (TF) and H25. Substrate is bound by residues K49, L81, and R95. ATP-binding positions include 96–98 (GLR), E106, and 131–137 (LMYISST).

It belongs to the bacterial CoaD family. Homohexamer. Mg(2+) is required as a cofactor.

The protein localises to the cytoplasm. It carries out the reaction (R)-4'-phosphopantetheine + ATP + H(+) = 3'-dephospho-CoA + diphosphate. The protein operates within cofactor biosynthesis; coenzyme A biosynthesis; CoA from (R)-pantothenate: step 4/5. Functionally, reversibly transfers an adenylyl group from ATP to 4'-phosphopantetheine, yielding dephospho-CoA (dPCoA) and pyrophosphate. This chain is Phosphopantetheine adenylyltransferase, found in Legionella pneumophila subsp. pneumophila (strain Philadelphia 1 / ATCC 33152 / DSM 7513).